A 396-amino-acid chain; its full sequence is S-adenosylmethionine synthase 2 (396 aa).

Glutamate 13 serves as a coordination point for Mg(2+). An ATP-binding site is contributed by histidine 19. Residue glutamate 47 coordinates K(+). Residues glutamate 60 and glutamine 103 each coordinate L-methionine. ATP is bound by residues 171-173, 239-242, aspartate 250, 256-257, alanine 273, lysine 277, and lysine 281; these read DGK, SGRF, and RK. Residue aspartate 250 participates in L-methionine binding. Residue lysine 281 coordinates L-methionine.

It belongs to the AdoMet synthase family. Homotetramer. It depends on Mn(2+) as a cofactor. The cofactor is Mg(2+). Co(2+) is required as a cofactor. K(+) serves as cofactor.

Its subcellular location is the cytoplasm. It catalyses the reaction L-methionine + ATP + H2O = S-adenosyl-L-methionine + phosphate + diphosphate. It functions in the pathway amino-acid biosynthesis; S-adenosyl-L-methionine biosynthesis; S-adenosyl-L-methionine from L-methionine: step 1/1. Functionally, catalyzes the formation of S-adenosylmethionine from methionine and ATP. The reaction comprises two steps that are both catalyzed by the same enzyme: formation of S-adenosylmethionine (AdoMet) and triphosphate, and subsequent hydrolysis of the triphosphate. This is S-adenosylmethionine synthase 2 (SAM2) from Dianthus caryophyllus (Carnation).